Here is a 310-residue protein sequence, read N- to C-terminus: tRNA dimethylallyltransferase (310 aa).

An ATP-binding site is contributed by 14-21 (GPTASGKS). Residue 16–21 (TASGKS) participates in substrate binding. Interaction with substrate tRNA regions lie at residues 39–42 (DSMQ) and 163–167 (QRIVR).

This sequence belongs to the IPP transferase family. Monomer. The cofactor is Mg(2+).

The catalysed reaction is adenosine(37) in tRNA + dimethylallyl diphosphate = N(6)-dimethylallyladenosine(37) in tRNA + diphosphate. Its function is as follows. Catalyzes the transfer of a dimethylallyl group onto the adenine at position 37 in tRNAs that read codons beginning with uridine, leading to the formation of N6-(dimethylallyl)adenosine (i(6)A). This Brucella abortus (strain S19) protein is tRNA dimethylallyltransferase.